Consider the following 294-residue polypeptide: Lipoprotein NlpI (294 aa).

Positions 1 to 18 (MKPFLRWCFVATALTLAG) are cleaved as a signal peptide. Cys-19 carries N-palmitoyl cysteine lipidation. The S-diacylglycerol cysteine moiety is linked to residue Cys-19. TPR repeat units follow at residues 62–95 (AQLL…RPDM), 96–129 (PEVF…DPTY), and 234–267 (SETN…NVHN).

Homodimer.

It is found in the cell membrane. In terms of biological role, may be involved in cell division. May play a role in bacterial septation or regulation of cell wall degradation during cell division. In Escherichia coli O157:H7, this protein is Lipoprotein NlpI (nlpI).